A 121-amino-acid polypeptide reads, in one-letter code: Putative iron-sulfur cluster insertion protein ErpA (121 aa).

Iron-sulfur cluster-binding residues include Cys-49, Cys-113, and Cys-115.

It belongs to the HesB/IscA family. Homodimer. Iron-sulfur cluster is required as a cofactor.

Functionally, required for insertion of 4Fe-4S clusters. In Verminephrobacter eiseniae (strain EF01-2), this protein is Putative iron-sulfur cluster insertion protein ErpA.